Consider the following 132-residue polypeptide: Large-conductance mechanosensitive channel (132 aa).

The next 3 helical transmembrane spans lie at F8–G28, I30–V50, and G67–I87.

It belongs to the MscL family. In terms of assembly, homopentamer.

The protein localises to the cell membrane. Channel that opens in response to stretch forces in the membrane lipid bilayer. May participate in the regulation of osmotic pressure changes within the cell. The polypeptide is Large-conductance mechanosensitive channel (Bacillus cytotoxicus (strain DSM 22905 / CIP 110041 / 391-98 / NVH 391-98)).